The following is a 417-amino-acid chain: Tol-Pal system protein TolB (417 aa).

Positions 1 to 16 (MRYLWLFLIHTIGLFA) are cleaved as a signal peptide.

This sequence belongs to the TolB family. In terms of assembly, the Tol-Pal system is composed of five core proteins: the inner membrane proteins TolA, TolQ and TolR, the periplasmic protein TolB and the outer membrane protein Pal. They form a network linking the inner and outer membranes and the peptidoglycan layer.

It is found in the periplasm. Functionally, part of the Tol-Pal system, which plays a role in outer membrane invagination during cell division and is important for maintaining outer membrane integrity. The sequence is that of Tol-Pal system protein TolB from Helicobacter pylori (strain ATCC 700392 / 26695) (Campylobacter pylori).